The chain runs to 265 residues: UPF0354 protein ABC2771 (265 aa).

The protein belongs to the UPF0354 family.

The polypeptide is UPF0354 protein ABC2771 (Shouchella clausii (strain KSM-K16) (Alkalihalobacillus clausii)).